We begin with the raw amino-acid sequence, 280 residues long: Inner kinetochore subunit fta1 (280 aa).

The protein belongs to the CENP-L/IML3 family. In terms of assembly, component of the inner kinetochore constitutive centromere-associated network (CCAN) (also known as central kinetochore Sim4 complex in fission yeast), which is composed of at least cnl2, cnp3, cnp20, fta1, fta2, fta3, fta4, fta6, fta7, mal2, mhf1, mhf2, mis6, mis15, mis17, sim4 and wip1.

It localises to the nucleus. It is found in the chromosome. The protein localises to the centromere. The protein resides in the kinetochore. In terms of biological role, component of the kinetochore, a multiprotein complex that assembles on centromeric DNA and attaches chromosomes to spindle microtubules, mediating chromosome segregation and sister chromatid segregation during meiosis and mitosis. Component of the inner kinetochore constitutive centromere-associated network (CCAN), which serves as a structural platform for outer kinetochore assembly. In Schizosaccharomyces pombe (strain 972 / ATCC 24843) (Fission yeast), this protein is Inner kinetochore subunit fta1 (fta1).